Here is a 122-residue protein sequence, read N- to C-terminus: Large ribosomal subunit protein uL18 (122 aa).

Belongs to the universal ribosomal protein uL18 family. In terms of assembly, part of the 50S ribosomal subunit; part of the 5S rRNA/L5/L18/L25 subcomplex. Contacts the 5S and 23S rRNAs.

This is one of the proteins that bind and probably mediate the attachment of the 5S RNA into the large ribosomal subunit, where it forms part of the central protuberance. This Kosmotoga olearia (strain ATCC BAA-1733 / DSM 21960 / TBF 19.5.1) protein is Large ribosomal subunit protein uL18.